The following is a 169-amino-acid chain: MRLSVRWVFFLGFFLCALMLAIAGYFQFVENLEPCPLCILSRVAVLAIGGVFLVAALHNPKSWGIKVYALLGFVVTLIGIGITGRHVWLQSLPADQVPACGPGLNFMLDNFPLTETLELVFRGSGECAEVQWSFLGLTIPGWTLVAFLFLGVISLWQMGRTGGGAGKLT.

At 1 to 8 (MRLSVRWV) the chain is on the cytoplasmic side. Residues 9-25 (FFLGFFLCALMLAIAGY) form a helical membrane-spanning segment. At 26 to 43 (FQFVENLEPCPLCILSRV) the chain is on the periplasmic side. Cys35 and Cys38 form a disulfide bridge. Residues 44 to 60 (AVLAIGGVFLVAALHNP) form a helical membrane-spanning segment. Residues 61–67 (KSWGIKV) lie on the Cytoplasmic side of the membrane. Residues 68 to 84 (YALLGFVVTLIGIGITG) form a helical membrane-spanning segment. Topologically, residues 85–141 (RHVWLQSLPADQVPACGPGLNFMLDNFPLTETLELVFRGSGECAEVQWSFLGLTIPG) are periplasmic. A disulfide bridge links Cys100 with Cys127. Residues 142 to 160 (WTLVAFLFLGVISLWQMGR) traverse the membrane as a helical segment. Residues 161–169 (TGGGAGKLT) are Cytoplasmic-facing.

This sequence belongs to the DsbB family.

The protein resides in the cell inner membrane. In terms of biological role, required for disulfide bond formation in some periplasmic proteins. Acts by oxidizing the DsbA protein. The sequence is that of Disulfide bond formation protein B from Nitrosococcus oceani (strain ATCC 19707 / BCRC 17464 / JCM 30415 / NCIMB 11848 / C-107).